Consider the following 306-residue polypeptide: Ribonuclease H2 subunit B (306 aa).

Positions 232 to 285 (LPDLSSPTPEPPVKKRRVSDAPVEADEDYTKYNSDNKSRKSNSKMTAAQKSLAK) are disordered. Positions 259 to 269 (DYTKYNSDNKS) are enriched in basic and acidic residues.

Belongs to the RNase H2 subunit B family. The RNase H2 complex is a heterotrimer composed of the catalytic subunit RNASEH2A and the non-catalytic subunits RNASEH2B and RNASEH2C.

It is found in the nucleus. Functionally, non catalytic subunit of RNase H2, an endonuclease that specifically degrades the RNA of RNA:DNA hybrids. Participates in DNA replication, possibly by mediating the removal of lagging-strand Okazaki fragment RNA primers during DNA replication. Mediates the excision of single ribonucleotides from DNA:RNA duplexes. The protein is Ribonuclease H2 subunit B (rnaseh2b) of Xenopus laevis (African clawed frog).